The chain runs to 1493 residues: ABC transporter C family member 7 (1493 aa).

The next 10 helical transmembrane spans lie at 21–41, 70–90, 102–122, 140–160, 165–185, 309–329, 343–360, 423–443, 448–468, and 535–555; these read FPMF…GSCV, VVIC…LSCF, LMIL…SFYI, VWWV…IALY, LVSV…LFLC, ILLS…APYL, YSNQ…AKLV, WYMH…LILY, LGSI…IPLA, and SVLW…CMLL. The ABC transmembrane type-1 1 domain occupies 309-590; the sequence is ILLSTLFAFV…LPDTISMIVQ (282 aa). An ABC transporter 1 domain is found at 624 to 847; it reads VEVSNGAFSW…GTDFMELVGA (224 aa). 659–666 provides a ligand contact to ATP; that stretch reads GTVGSGKS. Residues 863 to 898 form a disordered region; sequence ASAQSTTSKESKVSNDEEKQEEDLPSPKGQLVQEEE. Position 888 is a phosphoserine (Ser888). The next 6 helical transmembrane spans lie at 915–935, 959–979, 1038–1055, 1059–1081, 1153–1173, and 1177–1197; these read LAYG…FQVL, GSTL…CILV, FSNL…IGVM, AWQV…QYYI, LSTV…EGVI, and FAGL…TLIW. Residues 922–1204 enclose the ABC transmembrane type-1 2 domain; the sequence is VPIILVVQIL…LIWTLCDLEN (283 aa). Positions 1241–1475 constitute an ABC transporter 2 domain; the sequence is ITICNLQVRY…KSSSFSKLVA (235 aa). 1275-1282 contributes to the ATP binding site; it reads GRTGCGKS.

Belongs to the ABC transporter superfamily. ABCC family. Conjugate transporter (TC 3.A.1.208) subfamily. Ubiquitous.

Its subcellular location is the membrane. It carries out the reaction ATP + H2O + xenobioticSide 1 = ADP + phosphate + xenobioticSide 2.. In terms of biological role, pump for glutathione S-conjugates. In Arabidopsis thaliana (Mouse-ear cress), this protein is ABC transporter C family member 7 (ABCC7).